The chain runs to 587 residues: Complement component C8 beta chain (587 aa).

The N-terminal stretch at 1-31 (MNHKLKPTVGLGYCLLCAALCLLLLRDVAIA) is a signal peptide. The propeptide occupies 32-44 (GSGEEPSGVREAR). A TSP type-1 1 domain is found at 56-111 (DCVQSEWSSWTRCDVCRKKRYRYAKLVQPSQFGGEPCHVQGKEVEPCSPPSRYDCT). Intrachain disulfides connect cysteine 57–cysteine 92, cysteine 68–cysteine 102, cysteine 71–cysteine 110, cysteine 118–cysteine 129, and cysteine 123–cysteine 142. 2 C-linked (Man) tryptophan glycosylation sites follow: tryptophan 62 and tryptophan 65. In terms of domain architecture, LDL-receptor class A spans 117 to 159 (LCEGFLCTYTGRCVPIDLRCNGDDDCGDWSAEKGSPKVPKACK). Ca(2+) is bound by residues leucine 134, asparagine 137, aspartate 139, aspartate 141, and glutamate 148. The MACPF domain occupies 154–500 (VPKACKQEAQ…EYLEESSSCR (347 aa)). Cysteine 158 and cysteine 196 are oxidised to a cystine. 4 consecutive transmembrane segments (beta stranded) span residues 248-255 (TTVSIGFA), 258-265 (GVAEFGFN), 375-382 (EQIVLKVG), and 388-395 (VYVTVGLE). Intrachain disulfides connect cysteine 374–cysteine 399, cysteine 499–cysteine 546, cysteine 501–cysteine 517, cysteine 504–cysteine 519, and cysteine 521–cysteine 530. The region spanning 501 to 531 (CAPCRNNGLAVLKGTRCECVCPSGYSGLGCE) is the EGF-like domain. The region spanning 541-587 (DGSWSCWGSWSPCRGRSKTRSRQCNNPAPSSGGIACRGLQMETTDCF) is the TSP type-1 2 domain. C-linked (Man) tryptophan glycans are attached at residues tryptophan 547 and tryptophan 550. Cysteine 553 and cysteine 586 are joined by a disulfide.

This sequence belongs to the complement C6/C7/C8/C9 family. Heterotrimer of 3 chains: alpha (C8A), beta (C8B) and gamma (C8G); the alpha and gamma chains are disulfide bonded. Component of the membrane attack complex (MAC), composed of complement C5b, C6, C7, C8A, C8B, C8G and multiple copies of the pore-forming subunit C9.

The protein localises to the secreted. The protein resides in the target cell membrane. Its function is as follows. Component of the membrane attack complex (MAC), a multiprotein complex activated by the complement cascade, which inserts into a target cell membrane and forms a pore, leading to target cell membrane rupture and cell lysis. The MAC is initiated by proteolytic cleavage of C5 into complement C5b in response to the classical, alternative, lectin and GZMK complement pathways. The complement pathways consist in a cascade of proteins that leads to phagocytosis and breakdown of pathogens and signaling that strengthens the adaptive immune system. C8B, together with C8A and C8G, inserts into the target membrane, but does not form pores by itself. During MAC assembly, associates with C5b, C6 and C7 to form the C5b8 intermediate complex that inserts into the target membrane and traverses the bilayer increasing membrane rigidity. This Oncorhynchus mykiss (Rainbow trout) protein is Complement component C8 beta chain (c8b).